The chain runs to 444 residues: 3-phosphoshikimate 1-carboxyvinyltransferase (444 aa).

Residues lysine 32, serine 33, and arginine 37 each coordinate 3-phosphoshikimate. Lysine 32 provides a ligand contact to phosphoenolpyruvate. Residues glycine 105 and arginine 133 each contribute to the phosphoenolpyruvate site. Residues serine 178, glutamine 180, aspartate 326, and lysine 353 each contribute to the 3-phosphoshikimate site. Residue glutamine 180 coordinates phosphoenolpyruvate. Aspartate 326 functions as the Proton acceptor in the catalytic mechanism. Residues arginine 357 and arginine 398 each coordinate phosphoenolpyruvate.

The protein belongs to the EPSP synthase family. Monomer.

The protein resides in the cytoplasm. It carries out the reaction 3-phosphoshikimate + phosphoenolpyruvate = 5-O-(1-carboxyvinyl)-3-phosphoshikimate + phosphate. It participates in metabolic intermediate biosynthesis; chorismate biosynthesis; chorismate from D-erythrose 4-phosphate and phosphoenolpyruvate: step 6/7. Functionally, catalyzes the transfer of the enolpyruvyl moiety of phosphoenolpyruvate (PEP) to the 5-hydroxyl of shikimate-3-phosphate (S3P) to produce enolpyruvyl shikimate-3-phosphate and inorganic phosphate. This chain is 3-phosphoshikimate 1-carboxyvinyltransferase, found in Nitrosococcus oceani (strain ATCC 19707 / BCRC 17464 / JCM 30415 / NCIMB 11848 / C-107).